The sequence spans 796 residues: Choline transporter-like 2 (796 aa).

Asn20 carries an N-linked (GlcNAc...) asparagine glycan. Residues 35-55 (PCLLLFVLFLGGWAFIAQYAI) form a helical membrane-spanning segment. N-linked (GlcNAc...) asparagine glycans are attached at residues Asn209 and Asn284. Helical transmembrane passes span 304 to 324 (WSIVLVACFCTLVASLIYIAL), 332 to 352 (ILWFSIFGVLIGLLVGIYFSV), 386 to 406 (LYLSIFVGVCFVVILLLVIVL), and 431 to 451 (VFFPIFSWILFIAAIAFAIGV). N-linked (GlcNAc...) asparagine glycosylation is found at Asn488 and Asn520. Transmembrane regions (helical) follow at residues 542–562 (VFGFLWLSFFISAFSYMVLAS), 585–605 (FFQTAVYHLGTVAFGSLILAI), 626–648 (AVTRAILCCMRCFFWLLETFLKF), 691–711 (FLFFLSKLLLTAGAGASTYYF), and 724–744 (IAVPTTVVVIAAFLITSVFFG).

It belongs to the CTL (choline transporter-like) family.

The protein resides in the membrane. This is Choline transporter-like 2 from Drosophila melanogaster (Fruit fly).